A 265-amino-acid chain; its full sequence is Hydroxyethylthiazole kinase (265 aa).

Met-50 is a binding site for substrate. ATP is bound by residues Arg-125 and Thr-171. Residue Gly-198 participates in substrate binding.

The protein belongs to the Thz kinase family. It depends on Mg(2+) as a cofactor.

The enzyme catalyses 5-(2-hydroxyethyl)-4-methylthiazole + ATP = 4-methyl-5-(2-phosphooxyethyl)-thiazole + ADP + H(+). The protein operates within cofactor biosynthesis; thiamine diphosphate biosynthesis; 4-methyl-5-(2-phosphoethyl)-thiazole from 5-(2-hydroxyethyl)-4-methylthiazole: step 1/1. In terms of biological role, catalyzes the phosphorylation of the hydroxyl group of 4-methyl-5-beta-hydroxyethylthiazole (THZ). This Salmonella newport (strain SL254) protein is Hydroxyethylthiazole kinase.